A 492-amino-acid polypeptide reads, in one-letter code: MPPRRSHKKSRAGCRRCKNRKIKCDEVHPRCGNCAKHGVPCDFSNPDVLEELAISTNTSTESVGAPTPSPAPTVNFNSAPRTPLTRPRAPSSPARAPRPNPSPPTSVYSQPSISSSTNTIDHGERMLELRLMHHYTNVTSKTLLTNSPAAEDIWQRAVPQMAFSGNGKTYLADAILSVAALHLRSMSPNDKALVRASHAYSASSLSAFGASLGAGITPENAEALFLTATLIAFQASASRIFVKDDGDAAPGDPTVRYVPPLSWFHAFQGVKTVVANSWQWIHHSDIVKVIIDSQPSFQLNLNPRSPDSFFGHMLEGLADELSNEDPRLVASTTQAYSHAVSVLNWAHKNYHAAAALTFTATVSKRYVDLVDARRPRALAILACFFALLKRMDNVWWLQDVARREVMGLVSLFEPGSKWWRHLEWPIRIAVLDGSSIPQDIWGTELEEQAPEQQNVLGSMTQHIEMFAEMLNQHTQPPIPIADEDLIVPDSPD.

A DNA-binding region (zn(2)-C6 fungal-type) is located at residues 14–41 (CRRCKNRKIKCDEVHPRCGNCAKHGVPC). The segment at 58 to 119 (TSTESVGAPT…QPSISSSTNT (62 aa)) is disordered. Over residues 78–95 (SAPRTPLTRPRAPSSPAR) the composition is skewed to low complexity. Thr-82 carries the phosphothreonine modification. Phosphoserine is present on residues Ser-92 and Ser-102. Residues 107-119 (VYSQPSISSSTNT) are compositionally biased toward polar residues. At Thr-217 the chain carries Phosphothreonine. The residue at position 305 (Ser-305) is a Phosphoserine.

As to quaternary structure, interacts with HOG1. Post-translationally, phosphorylation at Thr-82, Ser-92, Ser-102, thr-117 and ser-305 by HOG1 is required for regulating expression of ergosterol biosynthesis genes.

The protein resides in the nucleus. Transcription factor that targets gene promoters containing 2 conserved CGAA repeat sequences. Positively regulates the expression of ergosterol biosynthesis genes including CYP51A and CYP51B encoding the sterol 14-alpha demethylase, and ERG6A and ERG6B encoding the sterol 24-C-methyltransferase. This is Zn(2)-C6 fungal-type transcription factor from Gibberella zeae (strain ATCC MYA-4620 / CBS 123657 / FGSC 9075 / NRRL 31084 / PH-1) (Wheat head blight fungus).